Reading from the N-terminus, the 127-residue chain is uncharacterized protein (127 aa).

Positions 1–23 (MAGVRARAPLPLALLLSLPAAPG) are cleaved as a signal peptide. The tract at residues 43–127 (CFEVGLRKPP…ACPPRAPLWR (85 aa)) is disordered. Residues 59-70 (PPSFSSGSSRPL) are compositionally biased toward low complexity.

It is found in the secreted. This is an uncharacterized protein from Homo sapiens (Human).